The following is a 1792-amino-acid chain: BTB/POZ domain-containing protein 8 (1792 aa).

BTB domains lie at 58 to 127 and 206 to 273; these read TDVT…NIKN and PDID…DIPD. 8 disordered regions span residues 528–554, 581–658, 670–692, 707–768, 788–815, 831–989, 1151–1283, and 1519–1607; these read DKGD…SDSG, SDGL…PRQV, TGQK…SGAR, KPLK…CDSP, SRPV…NNSV, AILK…KPHK, ERTN…SNDR, and SIDS…KSLD. 2 stretches are compositionally biased toward polar residues: residues 541 to 552 and 588 to 601; these read FSSSQQRKQVSD and GHSS…INKT. 2 stretches are compositionally biased toward basic and acidic residues: residues 602–625 and 640–650; these read LKQD…ELKT and SKTENGDKARL. The segment covering 724–740 has biased composition (polar residues); that stretch reads GPSSRSTDSSMEFSIST. The span at 744 to 758 shows a compositional bias: basic and acidic residues; sequence DEPKENGSTEEEKPS. A compositionally biased stretch (polar residues) spans 838 to 865; that stretch reads TSNGCTAAQQRTKSTPSNLTKTQGSQGE. Residues 866–877 show a composition bias toward low complexity; it reads SPNSVKSSVSSR. Basic and acidic residues-rich tracts occupy residues 878–891 and 927–939; these read QSDE…HNTT and KKGE…DSKQ. Polar residues predominate over residues 947-956; sequence ISKTQPSSQR. Positions 969 to 987 are enriched in basic and acidic residues; sequence MFHDVRDNNNKDSVSEQKP. Polar residues-rich tracts occupy residues 1151-1160 and 1195-1215; these read ERTNGTLNSA and SDVS…PKNM. Residues 1250 to 1259 show a composition bias toward low complexity; the sequence is SDTGSATTSS. Residues 1566–1594 show a composition bias toward basic and acidic residues; that stretch reads IQQRSKFLDSDVKSQERPCHLDLHQREPN. Positions 1597–1607 are enriched in polar residues; that stretch reads IPKNSSTKSLD.

As to quaternary structure, interacts (via N-terminus) with adapter protein complex AP-2 subunits alpha (AP2A1) and beta (AP2B1). As to expression, highly expressed in fetal brain. Weakly expressed in adult brain and prostate.

The protein localises to the cell projection. Its subcellular location is the axon. The protein resides in the presynapse. It localises to the cytoplasmic vesicle. It is found in the clathrin-coated vesicle. The protein localises to the nucleus. Functionally, involved in clathrin-mediated endocytosis at the synapse. Plays a role in neuronal development and in synaptic vesicle recycling in mature neurons, a process required for normal synaptic transmission. In Homo sapiens (Human), this protein is BTB/POZ domain-containing protein 8.